A 345-amino-acid polypeptide reads, in one-letter code: Dihydroorotase (345 aa).

His-13 and His-15 together coordinate Zn(2+). Residues 15-17 (HFR) and Asn-41 contribute to the substrate site. Zn(2+) is bound by residues Lys-98, His-135, and His-173. At Lys-98 the chain carries N6-carboxylysine. His-135 contacts substrate. A substrate-binding site is contributed by Leu-218. A Zn(2+)-binding site is contributed by Asp-246. Asp-246 is an active-site residue. Residues His-250 and Ala-262 each coordinate substrate.

It belongs to the metallo-dependent hydrolases superfamily. DHOase family. Class II DHOase subfamily. Homodimer. Zn(2+) is required as a cofactor.

It carries out the reaction (S)-dihydroorotate + H2O = N-carbamoyl-L-aspartate + H(+). The protein operates within pyrimidine metabolism; UMP biosynthesis via de novo pathway; (S)-dihydroorotate from bicarbonate: step 3/3. Catalyzes the reversible cyclization of carbamoyl aspartate to dihydroorotate. In Shewanella frigidimarina (strain NCIMB 400), this protein is Dihydroorotase.